A 269-amino-acid polypeptide reads, in one-letter code: Sororin (269 aa).

3 disordered regions span residues 1–39 (MSEGKKRSRGGLAIISPPKRRSQRKSTSDSPIPEPIMKR), 56–110 (VNTG…PKIN), and 146–169 (SLNSSSSLYSPTRKTDSSDTSTPN). The segment covering 57-66 (NTGSQSTPKV) has biased composition (polar residues). A KEN box motif is present at residues 85–87 (KEN). Residues 146 to 155 (SLNSSSSLYS) are compositionally biased toward low complexity. The FGF motif motif lies at 180–182 (FGF). The C-terminal Sororin domain stretch occupies residues 247-269 (LDEWAAFMNAEFEEAEKFDLTVE).

It belongs to the sororin family. As to quaternary structure, interacts with the APC/C complex. Interacts with the chromatin-bound cohesin complex; the interaction is indirect, occurs after DNA replication and requires acetylation of the cohesin component smc3. Interacts (via the FGF motif) with pds5a and pds5b; the interaction is direct and prevents the interaction of pds5a with wapl. Post-translationally, ubiquitinated by the APC/C complex in G1, leading to its degradation.

The protein resides in the nucleus. Its subcellular location is the chromosome. The protein localises to the cytoplasm. Its function is as follows. Regulator of sister chromatid cohesion in mitosis stabilizing cohesin complex association with chromatin. May antagonize the action of wapl which stimulates cohesin dissociation from chromatin. Cohesion ensures that chromosome partitioning is accurate in both meiotic and mitotic cells and plays an important role in DNA repair. Required for efficient DNA double-stranded break repair. The polypeptide is Sororin (cdca5-a) (Xenopus laevis (African clawed frog)).